The chain runs to 212 residues: Protein GrpE (212 aa).

The tract at residues 1 to 68 is disordered; sequence MAETSNNKTS…ELESAKKEIE (68 aa). The segment covering 9–30 has biased composition (basic and acidic residues); that stretch reads TSEEAKANEKKSQSETLEESKL. A compositionally biased stretch (low complexity) spans 40-60; it reads ETTQTESMETAETETSLQTEL.

It belongs to the GrpE family. Homodimer.

The protein localises to the cytoplasm. Participates actively in the response to hyperosmotic and heat shock by preventing the aggregation of stress-denatured proteins, in association with DnaK and GrpE. It is the nucleotide exchange factor for DnaK and may function as a thermosensor. Unfolded proteins bind initially to DnaJ; upon interaction with the DnaJ-bound protein, DnaK hydrolyzes its bound ATP, resulting in the formation of a stable complex. GrpE releases ADP from DnaK; ATP binding to DnaK triggers the release of the substrate protein, thus completing the reaction cycle. Several rounds of ATP-dependent interactions between DnaJ, DnaK and GrpE are required for fully efficient folding. The protein is Protein GrpE of Leptospira interrogans serogroup Icterohaemorrhagiae serovar copenhageni (strain Fiocruz L1-130).